We begin with the raw amino-acid sequence, 615 residues long: Peptidoglycan-binding protein YepA (615 aa).

The N-terminal stretch at 1–26 (MRNLAALLPALFLLGSSLLPAGTALA) is a signal peptide.

This sequence belongs to the bacterial solute-binding protein 5 family. As to quaternary structure, the complex is composed of one ATP-binding protein (YejF), two transmembrane proteins (YejB and YejE) and a solute-binding protein (YepA).

It localises to the periplasm. Its function is as follows. Part of the ABC transporter complex YejBEF-YepA involved in the uptake of muropeptides, the breakdown products of cell wall peptidoglycan. The import of muropeptides into the cell enables peptidoglycan recycling, which is vital for cell wall integrity in this bacterium. Probably binds muropeptides. This is Peptidoglycan-binding protein YepA from Agrobacterium fabrum (strain C58 / ATCC 33970) (Agrobacterium tumefaciens (strain C58)).